The chain runs to 595 residues: Glycine betaine transporter BetP (595 aa).

The Cytoplasmic segment spans residues Met-1–Asn-59. The chain crosses the membrane as a helical span at residues Trp-60 to Phe-80. At Lys-81–Asn-98 the chain is on the periplasmic side. The helical transmembrane segment at Leu-99 to Ala-119 threads the bilayer. Residues Ser-120–Arg-137 are Cytoplasmic-facing. The chain crosses the membrane as a helical span at residues Thr-138–Gly-158. Residues Ala-147, Ala-148, and Met-150 each contribute to the Na(+) site. Ile-152–Gly-153 serves as a coordination point for glycine betaine. The Periplasmic portion of the chain corresponds to Thr-159–Thr-185. Residues Met-186–Tyr-206 traverse the membrane as a helical segment. At Ser-207 to Lys-236 the chain is on the cytoplasmic side. Residues Leu-237–Gly-257 form a helical membrane-spanning segment. Glycine betaine is bound at residue Ser-253. Topologically, residues Ala-258–Asp-276 are periplasmic. The chain crosses the membrane as a helical span at residues Trp-277–Ser-296. Residues Gly-297–Gly-299 lie on the Cytoplasmic side of the membrane. Residues Lys-300–Val-323 form a helical membrane-spanning segment. Positions 306 and 310 each coordinate Na(+). Over Gly-324–Ser-365 the chain is Periplasmic. A helical membrane pass occupies residues Trp-366 to Ala-386. Residue Trp-373–Trp-377 participates in glycine betaine binding. The Cytoplasmic segment spans residues Arg-387–Glu-396. A helical transmembrane segment spans residues Phe-397 to Gly-417. The Periplasmic portion of the chain corresponds to Gly-418–Gln-451. A helical membrane pass occupies residues Ile-452–Met-476. Topologically, residues Gly-477 to Lys-489 are cytoplasmic. A helical membrane pass occupies residues Trp-490–Gly-510. Residues Gly-511–Asn-520 are Periplasmic-facing. The helical transmembrane segment at Val-521 to Val-541 threads the bilayer. Residues Lys-542–Arg-595 lie on the Cytoplasmic side of the membrane. The segment at His-570–Arg-595 is disordered. Over residues Lys-581 to Arg-595 the composition is skewed to basic residues.

Belongs to the BCCT transporter (TC 2.A.15) family. In terms of assembly, homotrimer. The monomer can accumulate glycine betaine, but trimerization is required to properly respond to osmotic stress.

Its subcellular location is the cell inner membrane. Uptake is activated by hyperosmotic stress. Osmoresponsive activation is triggered by a change in the internal K(+) concentration. In addition, shows a pronounced chill stimulation, at temperatures around 10 degrees Celsius. Chill activation may be influenced by the membrane lipid composition. Uptake is completely abolished by the uncoupler CCCP, and to a different extent by the ionophores valinomycin and nigericin. Functionally, involved in response to osmotic stress. High-affinity glycine betaine-specific uptake system, which couples the uptake of glycine betaine to the symport of two Na(+) ions. Transport is driven both by the Na(+) gradient and by the electrical potential. In addition, functions both as an osmosensor and as an osmoregulator that transduces signal to the catalytic part of the carrier protein, which adapts its activity to the extent of osmotic stress. The protein is Glycine betaine transporter BetP of Corynebacterium glutamicum (strain ATCC 13032 / DSM 20300 / JCM 1318 / BCRC 11384 / CCUG 27702 / LMG 3730 / NBRC 12168 / NCIMB 10025 / NRRL B-2784 / 534).